A 64-amino-acid polypeptide reads, in one-letter code: OPG024 protein (64 aa).

The tract at residues 1 to 64 (MSSKGGSSGG…GGVKSGTGKI (64 aa)) is disordered. Residues 23 to 34 (NKGSKTYTSSGS) show a composition bias toward low complexity. Residues 49-64 (VNGGVNGGVKSGTGKI) show a composition bias toward gly residues.

It belongs to the orthopoxvirus OPG024 family.

This chain is OPG024 protein (OPG023), found in Cynomys gunnisoni (Gunnison's prairie dog).